Here is a 494-residue protein sequence, read N- to C-terminus: Ubiquinol-cytochrome-c reductase complex core protein I, mitochondrial (494 aa).

His70 serves as a coordination point for Zn(2+). Residue Glu73 is the Proton acceptor of the active site. His74 and Glu150 together coordinate Zn(2+).

It belongs to the peptidase M16 family. UQCRC1/QCR1 subfamily. Component of the ubiquinol-cytochrome c oxidoreductase (cytochrome b-c1 complex, complex III, CIII), a multisubunit enzyme composed of 10 subunits. The complex is composed of 3 respiratory subunits cytochrome b, cytochrome c1 and Rieske protein, 2 core protein subunits, and additional low-molecular weight protein subunits. The complex exists as an obligatory dimer and forms supercomplexes (SCs) in the inner mitochondrial membrane with cytochrome c oxidase (complex IV, CIV). It depends on Zn(2+) as a cofactor. In terms of processing, the N-terminus is blocked.

It localises to the mitochondrion inner membrane. Component of the ubiquinol-cytochrome c oxidoreductase, a multisubunit transmembrane complex that is part of the mitochondrial electron transport chain which drives oxidative phosphorylation. The respiratory chain contains 3 multisubunit complexes succinate dehydrogenase (complex II, CII), ubiquinol-cytochrome c oxidoreductase (cytochrome b-c1 complex, complex III, CIII) and cytochrome c oxidase (complex IV, CIV), that cooperate to transfer electrons derived from NADH and succinate to molecular oxygen, creating an electrochemical gradient over the inner membrane that drives transmembrane transport and the ATP synthase. The cytochrome b-c1 complex catalyzes electron transfer from ubiquinol to cytochrome c, linking this redox reaction to translocation of protons across the mitochondrial inner membrane, with protons being carried across the membrane as hydrogens on the quinol. In the process called Q cycle, 2 protons are consumed from the matrix, 4 protons are released into the intermembrane space and 2 electrons are passed to cytochrome c. In Euglena gracilis, this protein is Ubiquinol-cytochrome-c reductase complex core protein I, mitochondrial.